A 204-amino-acid chain; its full sequence is Protein-L-isoaspartate O-methyltransferase (204 aa).

The protein belongs to the methyltransferase superfamily. L-isoaspartyl/D-aspartyl protein methyltransferase family. As to quaternary structure, monomer.

Its subcellular location is the cytoplasm. The catalysed reaction is [protein]-L-isoaspartate + S-adenosyl-L-methionine = [protein]-L-isoaspartate alpha-methyl ester + S-adenosyl-L-homocysteine. Functionally, catalyzes the methyl esterification of L-isoaspartyl residues in peptides and proteins that result from spontaneous decomposition of normal L-aspartyl and L-asparaginyl residues. It plays a role in the repair and/or degradation of damaged proteins. The sequence is that of Protein-L-isoaspartate O-methyltransferase (pcm) from Rhizobium meliloti (strain 1021) (Ensifer meliloti).